Consider the following 294-residue polypeptide: NAD kinase (294 aa).

The active-site Proton acceptor is D74. NAD(+) is bound by residues D74–G75, N148–D149, R159, R176, D178, T189–S194, and Q247.

It belongs to the NAD kinase family. A divalent metal cation serves as cofactor.

It is found in the cytoplasm. The catalysed reaction is NAD(+) + ATP = ADP + NADP(+) + H(+). Involved in the regulation of the intracellular balance of NAD and NADP, and is a key enzyme in the biosynthesis of NADP. Catalyzes specifically the phosphorylation on 2'-hydroxyl of the adenosine moiety of NAD to yield NADP. The chain is NAD kinase from Azoarcus sp. (strain BH72).